A 551-amino-acid chain; its full sequence is MQGAWVLLLLGFRLQLSLSVIPVEEENPAFWTQKAADALNVAKKLQPIQTSAKNLIIFLGDGMGVATVTATRILKGQLEGNLGPETPLAMDHFPYMALSKTYSVDRQVPDSASTATAYLCGVKTNYKTIGVSAAARFDQCNTTFGNEVLSVMYRAKKAGKSVGVGDHTRVQHASPAGTYVHTVTSNWYGDADMPALPLQEGCKDIATQLISNMDINVILGGGRKYMFPAGTPDPEYPNDVNETGTRLDGKNLVQEWLSKHQGSQYVWNRQELIQKSLDPSVTYLMGLFEPVDTKFEIQRDPLMDPSLKDMTEAALHVLSRNPKGFYLFVEGGRIDRGHHLGTAYLALTEAVMFDSAIERASLQASEQDTLTIVTADHSHVFSFGGYTLRGTSIFGLAPLNALDGKPYTSILYGNGPGYVGTGERPNVTDAESHDPSYQQQAAVPVKSETTVGKDVAIFARGPQAHLLHGVQEQNYIAHVMAFAGCLEPYTDCGLAPPADENRPTTPVQNSTTTTTTTTTTTTTTTTTRVQNSASSLGPATAPLAWHYWPRR.

The N-terminal stretch at 1 to 19 is a signal peptide; the sequence is MQGAWVLLLLGFRLQLSLS. A Mg(2+)-binding site is contributed by aspartate 61. 2 residues coordinate Zn(2+): aspartate 61 and serine 111. Serine 111 acts as the Phosphoserine intermediate in catalysis. A disulfide bond links cysteine 140 and cysteine 202. An N-linked (GlcNAc...) asparagine glycan is attached at asparagine 141. Serine 174 serves as a coordination point for Mg(2+). Glutamate 235 serves as a coordination point for Ca(2+). Residue asparagine 241 is glycosylated (N-linked (GlcNAc...) asparagine). Residues phenylalanine 288, glutamate 289, and aspartate 304 each coordinate Ca(2+). Glutamate 330 provides a ligand contact to Mg(2+). Residues aspartate 335, histidine 339, aspartate 376, and histidine 377 each contribute to the Zn(2+) site. An N-linked (GlcNAc...) asparagine glycan is attached at asparagine 426. Cysteine 485 and cysteine 492 are disulfide-bonded. The segment at 496 to 537 is disordered; the sequence is PPADENRPTTPVQNSTTTTTTTTTTTTTTTTTRVQNSASSLG. Asparagine 509 carries N-linked (GlcNAc...) asparagine glycosylation. Positions 511 to 527 are enriched in low complexity; the sequence is TTTTTTTTTTTTTTTTT. Over residues 528–537 the composition is skewed to polar residues; sequence RVQNSASSLG. The GPI-anchor amidated asparagine moiety is linked to residue asparagine 531. Positions 532–551 are cleaved as a propeptide — removed in mature form; the sequence is SASSLGPATAPLAWHYWPRR.

The protein belongs to the alkaline phosphatase family. As to quaternary structure, homodimer. It depends on Mg(2+) as a cofactor. Zn(2+) serves as cofactor. Requires Ca(2+) as cofactor.

The protein localises to the cell membrane. The enzyme catalyses a phosphate monoester + H2O = an alcohol + phosphate. Alkaline phosphatase that can hydrolyze various phosphate compounds. The polypeptide is Intestinal-type alkaline phosphatase 2 (Rattus norvegicus (Rat)).